We begin with the raw amino-acid sequence, 381 residues long: Homoserine O-succinyltransferase (381 aa).

The AB hydrolase-1 domain maps to 45–360 (NAVLVCHALN…PHGHDAFLLD (316 aa)). The active-site Nucleophile is the Ser-151. Position 221 (Arg-221) interacts with substrate. Residues Asp-321 and His-354 contribute to the active site. Asp-355 is a binding site for substrate.

This sequence belongs to the AB hydrolase superfamily. MetX family. Homodimer.

Its subcellular location is the cytoplasm. It carries out the reaction L-homoserine + succinyl-CoA = O-succinyl-L-homoserine + CoA. It participates in amino-acid biosynthesis; L-methionine biosynthesis via de novo pathway; O-succinyl-L-homoserine from L-homoserine: step 1/1. Transfers a succinyl group from succinyl-CoA to L-homoserine, forming succinyl-L-homoserine. The protein is Homoserine O-succinyltransferase of Burkholderia mallei (strain NCTC 10247).